A 447-amino-acid polypeptide reads, in one-letter code: Exodeoxyribonuclease 7 large subunit (447 aa).

It belongs to the XseA family. In terms of assembly, heterooligomer composed of large and small subunits.

The protein localises to the cytoplasm. It catalyses the reaction Exonucleolytic cleavage in either 5'- to 3'- or 3'- to 5'-direction to yield nucleoside 5'-phosphates.. In terms of biological role, bidirectionally degrades single-stranded DNA into large acid-insoluble oligonucleotides, which are then degraded further into small acid-soluble oligonucleotides. The chain is Exodeoxyribonuclease 7 large subunit from Thioalkalivibrio sulfidiphilus (strain HL-EbGR7).